The chain runs to 385 residues: MKKIILVAGGTGGHFFPAVALGEELIKRGYIVHFITDLRCKKYINKDMKIIFHILNLKRFSNIFLFLPILSITFLKSIRLIYNIKCCVIIGFGGYPVIAPMFAAIFLRIPIIIHEQNSYLGKVNKFFARFAKKIATSYEDIKNLPEFAKSKIVLTGGIVRKNIRELDSFMYSVSQHSLTKLTQTALTNTFNPLVKGRNDEFANSNIFTIFIFGGSQGAKLFSELIPASIKILMKKQPSLELNIIQQAALDHQVKIKDIYSKLNITYEFAEFFDNIALQYKVANLVISRAGASTIEELTYIGLPAIFIPLPSAADNHQYYNAKLLEDNKAGWCLEQNNISSEKLADKILDLISNRQLLEDASQNLLNRKKEGHVLLSNLIEDTVFL.

Residues 11–13, N117, R160, S215, and Q317 contribute to the UDP-N-acetyl-alpha-D-glucosamine site; that span reads TGG.

This sequence belongs to the glycosyltransferase 28 family. MurG subfamily.

The protein resides in the cell inner membrane. The catalysed reaction is di-trans,octa-cis-undecaprenyl diphospho-N-acetyl-alpha-D-muramoyl-L-alanyl-D-glutamyl-meso-2,6-diaminopimeloyl-D-alanyl-D-alanine + UDP-N-acetyl-alpha-D-glucosamine = di-trans,octa-cis-undecaprenyl diphospho-[N-acetyl-alpha-D-glucosaminyl-(1-&gt;4)]-N-acetyl-alpha-D-muramoyl-L-alanyl-D-glutamyl-meso-2,6-diaminopimeloyl-D-alanyl-D-alanine + UDP + H(+). It functions in the pathway cell wall biogenesis; peptidoglycan biosynthesis. Functionally, cell wall formation. Catalyzes the transfer of a GlcNAc subunit on undecaprenyl-pyrophosphoryl-MurNAc-pentapeptide (lipid intermediate I) to form undecaprenyl-pyrophosphoryl-MurNAc-(pentapeptide)GlcNAc (lipid intermediate II). In Rickettsia prowazekii (strain Madrid E), this protein is UDP-N-acetylglucosamine--N-acetylmuramyl-(pentapeptide) pyrophosphoryl-undecaprenol N-acetylglucosamine transferase.